A 78-amino-acid polypeptide reads, in one-letter code: Acyl carrier protein (78 aa).

The Carrier domain occupies 1-76; it reads MALFEDIQAV…DVVKYIEDNK (76 aa). Ser36 bears the O-(pantetheine 4'-phosphoryl)serine mark.

It belongs to the acyl carrier protein (ACP) family. In terms of processing, 4'-phosphopantetheine is transferred from CoA to a specific serine of apo-ACP by AcpS. This modification is essential for activity because fatty acids are bound in thioester linkage to the sulfhydryl of the prosthetic group.

The protein localises to the cytoplasm. It participates in lipid metabolism; fatty acid biosynthesis. Its function is as follows. Carrier of the growing fatty acid chain in fatty acid biosynthesis. The sequence is that of Acyl carrier protein from Helicobacter acinonychis (strain Sheeba).